The chain runs to 268 residues: MVRKSPGSGKEEDFTFISPVVKYLLIFFNMLFWVISMVMVGIGVYARLLKHAEAAMACLAVDPALLLIGVGILMFLITFCGCIGSLRENICLLQTFSICLTLVFLLQLAVGIVGFIFSDKARGKVSEIISNAIEHYRDDLDLQNLIDFGQKEFSCCGGISYKDWSQNMYFNCSSENRSQERCSVPYSCCLHDEGEAVINTLCGQGMQELDYLEAGEFIHTNGCIDRLVNWIHSNLFLLGGVALGLAIPQVTKHLRAKLIYTWRIGIQV.

Residues 1–23 are Cytoplasmic-facing; the sequence is MVRKSPGSGKEEDFTFISPVVKY. Residues 24–44 traverse the membrane as a helical segment; sequence LLIFFNMLFWVISMVMVGIGV. Topologically, residues 45-63 are extracellular; that stretch reads YARLLKHAEAAMACLAVDP. A helical transmembrane segment spans residues 64 to 84; it reads ALLLIGVGILMFLITFCGCIG. Residues 85–95 lie on the Cytoplasmic side of the membrane; that stretch reads SLRENICLLQT. The chain crosses the membrane as a helical span at residues 96–116; it reads FSICLTLVFLLQLAVGIVGFI. Over 117 to 226 the chain is Extracellular; that stretch reads FSDKARGKVS…FIHTNGCIDR (110 aa). Disulfide bonds link Cys155-Cys223, Cys156-Cys188, Cys172-Cys182, and Cys189-Cys202. N-linked (GlcNAc...) asparagine glycosylation is found at Asn171 and Asn176. Residues 227–247 traverse the membrane as a helical segment; sequence LVNWIHSNLFLLGGVALGLAI. Residues 248-268 lie on the Cytoplasmic side of the membrane; the sequence is PQVTKHLRAKLIYTWRIGIQV.

It belongs to the tetraspanin (TM4SF) family. Homodimer; disulfide-linked.

The protein resides in the cell membrane. It localises to the cell junction. It is found in the adherens junction. Its subcellular location is the cytoplasm. Functionally, part of TspanC8 subgroup, composed of 6 members that interact with the transmembrane metalloprotease ADAM10. This interaction is required for ADAM10 exit from the endoplasmic reticulum and for enzymatic maturation and trafficking to the cell surface as well as substrate specificity. Different TspanC8/ADAM10 complexes have distinct substrates. This chain is Tetraspanin-33 (tspan33), found in Xenopus laevis (African clawed frog).